The following is a 156-amino-acid chain: Deoxyuridine 5'-triphosphate nucleotidohydrolase (156 aa).

Residues 76–78, asparagine 89, 93–95, and lysine 103 each bind substrate; these read RSG and TVD.

This sequence belongs to the dUTPase family. The cofactor is Mg(2+).

It carries out the reaction dUTP + H2O = dUMP + diphosphate + H(+). It functions in the pathway pyrimidine metabolism; dUMP biosynthesis; dUMP from dCTP (dUTP route): step 2/2. In terms of biological role, this enzyme is involved in nucleotide metabolism: it produces dUMP, the immediate precursor of thymidine nucleotides and it decreases the intracellular concentration of dUTP so that uracil cannot be incorporated into DNA. The polypeptide is Deoxyuridine 5'-triphosphate nucleotidohydrolase (Rhizobium etli (strain ATCC 51251 / DSM 11541 / JCM 21823 / NBRC 15573 / CFN 42)).